The chain runs to 219 residues: Large ribosomal subunit protein uL4 (219 aa).

Residues 43 to 101 (AAARQGTHKTKRRGEVRGGGKKPYRQKGTGRARQGSTRAPQFAGGGVVHGPQPRDYSQR) are disordered. Over residues 61 to 72 (GGKKPYRQKGTG) the composition is skewed to basic residues.

This sequence belongs to the universal ribosomal protein uL4 family. Part of the 50S ribosomal subunit.

One of the primary rRNA binding proteins, this protein initially binds near the 5'-end of the 23S rRNA. It is important during the early stages of 50S assembly. It makes multiple contacts with different domains of the 23S rRNA in the assembled 50S subunit and ribosome. Its function is as follows. Forms part of the polypeptide exit tunnel. This Streptomyces coelicolor (strain ATCC BAA-471 / A3(2) / M145) protein is Large ribosomal subunit protein uL4.